A 432-amino-acid polypeptide reads, in one-letter code: 5-methylthioadenosine/S-adenosylhomocysteine deaminase (432 aa).

H62 and H64 together coordinate Zn(2+). Residues E91 and H184 each coordinate substrate. Residue H211 coordinates Zn(2+). The substrate site is built by E214 and D299. D299 contacts Zn(2+).

This sequence belongs to the metallo-dependent hydrolases superfamily. MTA/SAH deaminase family. Requires Zn(2+) as cofactor.

The enzyme catalyses S-adenosyl-L-homocysteine + H2O + H(+) = S-inosyl-L-homocysteine + NH4(+). It carries out the reaction S-methyl-5'-thioadenosine + H2O + H(+) = S-methyl-5'-thioinosine + NH4(+). Catalyzes the deamination of 5-methylthioadenosine and S-adenosyl-L-homocysteine into 5-methylthioinosine and S-inosyl-L-homocysteine, respectively. Is also able to deaminate adenosine. This chain is 5-methylthioadenosine/S-adenosylhomocysteine deaminase, found in Haloarcula marismortui (strain ATCC 43049 / DSM 3752 / JCM 8966 / VKM B-1809) (Halobacterium marismortui).